The sequence spans 107 residues: uncharacterized protein (107 aa).

The helical transmembrane segment at 52 to 72 (LIIHDLFIYIFILNFFFFPFC) threads the bilayer.

Its subcellular location is the membrane. This is an uncharacterized protein from Saccharomyces cerevisiae (strain ATCC 204508 / S288c) (Baker's yeast).